A 255-amino-acid polypeptide reads, in one-letter code: Pyridoxine 5'-phosphate synthase (255 aa).

A 3-amino-2-oxopropyl phosphate-binding site is contributed by N12. Residue 14–15 (DH) participates in 1-deoxy-D-xylulose 5-phosphate binding. R23 contacts 3-amino-2-oxopropyl phosphate. H48 serves as the catalytic Proton acceptor. The 1-deoxy-D-xylulose 5-phosphate site is built by R50 and H55. The Proton acceptor role is filled by E75. T105 is a binding site for 1-deoxy-D-xylulose 5-phosphate. H199 acts as the Proton donor in catalysis. 3-amino-2-oxopropyl phosphate contacts are provided by residues G200 and 221 to 222 (GF).

The protein belongs to the PNP synthase family. As to quaternary structure, homooctamer; tetramer of dimers.

The protein resides in the cytoplasm. The enzyme catalyses 3-amino-2-oxopropyl phosphate + 1-deoxy-D-xylulose 5-phosphate = pyridoxine 5'-phosphate + phosphate + 2 H2O + H(+). Its pathway is cofactor biosynthesis; pyridoxine 5'-phosphate biosynthesis; pyridoxine 5'-phosphate from D-erythrose 4-phosphate: step 5/5. Functionally, catalyzes the complicated ring closure reaction between the two acyclic compounds 1-deoxy-D-xylulose-5-phosphate (DXP) and 3-amino-2-oxopropyl phosphate (1-amino-acetone-3-phosphate or AAP) to form pyridoxine 5'-phosphate (PNP) and inorganic phosphate. In Rhodopseudomonas palustris (strain BisB18), this protein is Pyridoxine 5'-phosphate synthase.